Consider the following 124-residue polypeptide: MATINQLVRKPRSLKAAKSNVPALEACPQKRGVCTRVYTTTPKKPNSALRKVCRVRLTNGFEVTSYIGGEGHNLQEHSVILIRGGRVKDLPGVRYHTVRGALDCSGVKDRKQSRSKYGVKKPKA.

D89 bears the 3-methylthioaspartic acid mark.

It belongs to the universal ribosomal protein uS12 family. Part of the 30S ribosomal subunit. Contacts proteins S8 and S17. May interact with IF1 in the 30S initiation complex.

Its function is as follows. With S4 and S5 plays an important role in translational accuracy. Interacts with and stabilizes bases of the 16S rRNA that are involved in tRNA selection in the A site and with the mRNA backbone. Located at the interface of the 30S and 50S subunits, it traverses the body of the 30S subunit contacting proteins on the other side and probably holding the rRNA structure together. The combined cluster of proteins S8, S12 and S17 appears to hold together the shoulder and platform of the 30S subunit. The protein is Small ribosomal subunit protein uS12 of Pectobacterium atrosepticum (strain SCRI 1043 / ATCC BAA-672) (Erwinia carotovora subsp. atroseptica).